Reading from the N-terminus, the 597-residue chain is Arginine--tRNA ligase (597 aa).

A 'HIGH' region motif is present at residues 125–135; the sequence is PNTNKPLHLGH.

It belongs to the class-I aminoacyl-tRNA synthetase family. In terms of assembly, monomer.

The protein localises to the cytoplasm. It catalyses the reaction tRNA(Arg) + L-arginine + ATP = L-arginyl-tRNA(Arg) + AMP + diphosphate. The chain is Arginine--tRNA ligase from Bacteroides fragilis (strain ATCC 25285 / DSM 2151 / CCUG 4856 / JCM 11019 / LMG 10263 / NCTC 9343 / Onslow / VPI 2553 / EN-2).